A 483-amino-acid chain; its full sequence is Regulatory protein ViaA (483 aa).

Belongs to the ViaA family. As to quaternary structure, homodimer. Interacts with RavA.

The protein resides in the cytoplasm. Component of the RavA-ViaA chaperone complex, which may act on the membrane to optimize the function of some of the respiratory chains. ViaA stimulates the ATPase activity of RavA. This Salmonella heidelberg (strain SL476) protein is Regulatory protein ViaA.